The sequence spans 237 residues: tRNA (guanine-N(7)-)-methyltransferase (237 aa).

Positions 68, 93, 120, and 143 each coordinate S-adenosyl-L-methionine. Residue D143 is part of the active site. Substrate is bound by residues K147, D179, and 216–219 (TKFE).

Belongs to the class I-like SAM-binding methyltransferase superfamily. TrmB family.

The catalysed reaction is guanosine(46) in tRNA + S-adenosyl-L-methionine = N(7)-methylguanosine(46) in tRNA + S-adenosyl-L-homocysteine. It functions in the pathway tRNA modification; N(7)-methylguanine-tRNA biosynthesis. Catalyzes the formation of N(7)-methylguanine at position 46 (m7G46) in tRNA. This Shewanella piezotolerans (strain WP3 / JCM 13877) protein is tRNA (guanine-N(7)-)-methyltransferase.